The sequence spans 306 residues: Agmatinase (306 aa).

Mn(2+) is bound by residues His-126, Asp-149, His-151, Asp-153, Asp-230, and Asp-232.

It belongs to the arginase family. Agmatinase subfamily. Requires Mn(2+) as cofactor.

The catalysed reaction is agmatine + H2O = urea + putrescine. It functions in the pathway amine and polyamine biosynthesis; putrescine biosynthesis via agmatine pathway; putrescine from agmatine: step 1/1. Catalyzes the formation of putrescine from agmatine. This chain is Agmatinase, found in Escherichia coli O7:K1 (strain IAI39 / ExPEC).